We begin with the raw amino-acid sequence, 86 residues long: Photosystem I reaction center subunit PsaK 1 (86 aa).

A run of 2 helical transmembrane segments spans residues 14 to 34 (LSWS…AIAF) and 61 to 81 (AVLG…LGLA).

Belongs to the PsaG/PsaK family.

The protein localises to the cellular thylakoid membrane. This is Photosystem I reaction center subunit PsaK 1 (psaK1) from Synechocystis sp. (strain ATCC 27184 / PCC 6803 / Kazusa).